A 574-amino-acid chain; its full sequence is Membrane protein insertase YidC (574 aa).

Helical transmembrane passes span 6–26, 356–376, 380–400, 447–467, 489–509, and 525–545; these read VFLIFAWLMVAALLWMEWGKD, FSIMAIIGQGLFWVLSHLHSF, WGWAIIGLVVLLRLALYPLSA, GGCLPLLIQMPIFFALYWVLV, PYFILPLLNISIMWATQKLTP, and PLVFGVMMAFMPAGLVLYWVV.

Belongs to the OXA1/ALB3/YidC family. Type 1 subfamily. As to quaternary structure, interacts with the Sec translocase complex via SecD. Specifically interacts with transmembrane segments of nascent integral membrane proteins during membrane integration.

It localises to the cell inner membrane. Its function is as follows. Required for the insertion and/or proper folding and/or complex formation of integral membrane proteins into the membrane. Involved in integration of membrane proteins that insert both dependently and independently of the Sec translocase complex, as well as at least some lipoproteins. Aids folding of multispanning membrane proteins. This is Membrane protein insertase YidC from Xanthomonas axonopodis pv. citri (strain 306).